We begin with the raw amino-acid sequence, 369 residues long: Delta(12)-oleate desaturase (369 aa).

A run of 2 helical transmembrane segments spans residues 41-61 (LLSD…YFPL) and 69-89 (IAWP…WVIA). Residues 90–94 (HECGH) carry the Histidine box-1 motif. A helical transmembrane segment spans residues 102–122 (LIDDIVGLFFHSALLVPYFSW). Positions 126–130 (HRRHH) match the Histidine box-2 motif. 3 helical membrane-spanning segments follow: residues 164–184 (LISL…FNMS), 207–227 (WIQV…LYRI), and 234–254 (FWVM…LVLI). The Histidine box-3 signature appears at 300–304 (HVVHH).

It belongs to the fatty acid desaturase type 1 family.

The protein localises to the membrane. Its pathway is lipid metabolism; polyunsaturated fatty acid biosynthesis. Its function is as follows. Delta(12)-fatty acid desaturase producing in a heterologous system linoleic acid (18:2(9Z,12Z)) and to a lower extent hexadecadienoic acid (16:2(9Z,12Z)). This chain is Delta(12)-oleate desaturase, found in Trichosanthes kirilowii (Chinese snake gourd).